Here is a 243-residue protein sequence, read N- to C-terminus: Tryptophan synthase alpha chain (243 aa).

Residues glutamate 31 and aspartate 42 each act as proton acceptor in the active site.

The protein belongs to the TrpA family. As to quaternary structure, tetramer of two alpha and two beta chains.

The enzyme catalyses (1S,2R)-1-C-(indol-3-yl)glycerol 3-phosphate + L-serine = D-glyceraldehyde 3-phosphate + L-tryptophan + H2O. It functions in the pathway amino-acid biosynthesis; L-tryptophan biosynthesis; L-tryptophan from chorismate: step 5/5. In terms of biological role, the alpha subunit is responsible for the aldol cleavage of indoleglycerol phosphate to indole and glyceraldehyde 3-phosphate. The chain is Tryptophan synthase alpha chain from Staphylococcus epidermidis (strain ATCC 35984 / DSM 28319 / BCRC 17069 / CCUG 31568 / BM 3577 / RP62A).